The chain runs to 135 residues: Ribosome-binding factor A (135 aa).

Belongs to the RbfA family. As to quaternary structure, monomer. Binds 30S ribosomal subunits, but not 50S ribosomal subunits or 70S ribosomes.

Its subcellular location is the cytoplasm. Functionally, one of several proteins that assist in the late maturation steps of the functional core of the 30S ribosomal subunit. Associates with free 30S ribosomal subunits (but not with 30S subunits that are part of 70S ribosomes or polysomes). Required for efficient processing of 16S rRNA. May interact with the 5'-terminal helix region of 16S rRNA. This chain is Ribosome-binding factor A, found in Hyphomonas neptunium (strain ATCC 15444).